A 352-amino-acid chain; its full sequence is Protein-glutamate methylesterase/protein-glutamine glutaminase 2 (352 aa).

A Response regulatory domain is found at 1 to 116 (MIVDDSAIVR…KDFIQDAASD (116 aa)). Residue D50 is modified to 4-aspartylphosphate. One can recognise a CheB-type methylesterase domain in the interval 159–351 (SKTTEHVVAI…QEIMRYAHLK (193 aa)). Catalysis depends on residues S171, H197, and D293.

It belongs to the CheB family. Phosphorylated by CheA. Phosphorylation of the N-terminal regulatory domain activates the methylesterase activity.

It localises to the cytoplasm. It catalyses the reaction [protein]-L-glutamate 5-O-methyl ester + H2O = L-glutamyl-[protein] + methanol + H(+). It carries out the reaction L-glutaminyl-[protein] + H2O = L-glutamyl-[protein] + NH4(+). Involved in chemotaxis. Part of a chemotaxis signal transduction system that modulates chemotaxis in response to various stimuli. Catalyzes the demethylation of specific methylglutamate residues introduced into the chemoreceptors (methyl-accepting chemotaxis proteins or MCP) by CheR. Also mediates the irreversible deamidation of specific glutamine residues to glutamic acid. The sequence is that of Protein-glutamate methylesterase/protein-glutamine glutaminase 2 from Shewanella denitrificans (strain OS217 / ATCC BAA-1090 / DSM 15013).